The chain runs to 51 residues: Large ribosomal subunit protein eL39 (51 aa).

It belongs to the eukaryotic ribosomal protein eL39 family.

This is Large ribosomal subunit protein eL39 from Pyrobaculum islandicum (strain DSM 4184 / JCM 9189 / GEO3).